The sequence spans 273 residues: Cell wall mannoprotein 1 (273 aa).

Positions 1-17 are cleaved as a signal peptide; sequence MRFSAIFTLGLAGTALA. The segment at 173-247 is disordered; that stretch reads DVSDSAPSSS…GSASATSPPL (75 aa). A compositionally biased stretch (low complexity) spans 177-247; that stretch reads SAPSSSAGSS…GSASATSPPL (71 aa).

It belongs to the cell wall mannoprotein 1 family. Galactomannoprotein, glycosylated.

It is found in the secreted. It localises to the cell wall. Its function is as follows. Constitutive protein of the cell wall. Antigen target of host humoral immune response. The protein is Cell wall mannoprotein 1 of Aspergillus flavus.